We begin with the raw amino-acid sequence, 444 residues long: MDEEYEVIVLGTGLKECILSGLLSVDGVKVLHMDRNDYYGGESTSLNLNQLWKKFRGEEKAPEHLGASRDYNVDMMPKFMMGNGKLVRTLIHTDVTKYLSFKAVDGSYVFVKGKVQKVPATPMEALKSSLMGIFEKRRAGKFFSFVQEYDEKDPKTHDGMDLTRVTTKELIAKYGLDGNTIDFIGHAVALHTNDQHLDQPAFDTVMRMKLYAESLARFQGTSPYIYPLYGLGELPQAFARLSAVYGGTYMLNKPECKVEFDEGGKVIGVTSEGETAKCKKIVCDPSYLPNKVRKIGRVARAIAIMSHPIPNTNDSHSVQVIIPQKQLARKSDMYVFCCSYSHNVAPKGKFIAFVSTDAETDNPQTELKPGTDLLGPVDEIFFDMYDRYEPVNEPELDNCFISTSYDATTHFETTVADVLNMYTLITGKQLDLSVDLSAASAAEE.

It belongs to the Rab GDI family. In terms of tissue distribution, expressed in roots and floral buds.

Regulates the GDP/GTP exchange reaction of most RAB proteins by inhibiting the dissociation of GDP from them, and the subsequent binding of GTP. The chain is Guanosine nucleotide diphosphate dissociation inhibitor 2 (GDI2) from Arabidopsis thaliana (Mouse-ear cress).